An 855-amino-acid polypeptide reads, in one-letter code: DNA mismatch repair protein MutS (855 aa).

Residue 613–620 (GPNMGGKS) coordinates ATP. A disordered region spans residues 795–816 (ETTSLPHEVPSQQSGKPASPMQ). The segment covering 796–816 (TTSLPHEVPSQQSGKPASPMQ) has biased composition (polar residues).

Belongs to the DNA mismatch repair MutS family.

This protein is involved in the repair of mismatches in DNA. It is possible that it carries out the mismatch recognition step. This protein has a weak ATPase activity. The sequence is that of DNA mismatch repair protein MutS from Pseudomonas paraeruginosa (strain DSM 24068 / PA7) (Pseudomonas aeruginosa (strain PA7)).